Reading from the N-terminus, the 416-residue chain is UDP-N-acetylglucosamine 1-carboxyvinyltransferase (416 aa).

Residue 22 to 23 coordinates phosphoenolpyruvate; it reads KN. Arg92 contributes to the UDP-N-acetyl-alpha-D-glucosamine binding site. Cys116 (proton donor) is an active-site residue. At Cys116 the chain carries 2-(S-cysteinyl)pyruvic acid O-phosphothioketal. UDP-N-acetyl-alpha-D-glucosamine is bound by residues 121–125, Asp304, and Ile326; that span reads RPVDQ.

Belongs to the EPSP synthase family. MurA subfamily.

Its subcellular location is the cytoplasm. It catalyses the reaction phosphoenolpyruvate + UDP-N-acetyl-alpha-D-glucosamine = UDP-N-acetyl-3-O-(1-carboxyvinyl)-alpha-D-glucosamine + phosphate. It functions in the pathway cell wall biogenesis; peptidoglycan biosynthesis. Functionally, cell wall formation. Adds enolpyruvyl to UDP-N-acetylglucosamine. The chain is UDP-N-acetylglucosamine 1-carboxyvinyltransferase from Cupriavidus metallidurans (strain ATCC 43123 / DSM 2839 / NBRC 102507 / CH34) (Ralstonia metallidurans).